The following is a 504-amino-acid chain: Glutamate--tRNA ligase (504 aa).

Residues 12-22 (PSPTGALHIGG) carry the 'HIGH' region motif. The 'KMSKS' region motif lies at 260–264 (KLSKR). ATP is bound at residue lysine 263.

The protein belongs to the class-I aminoacyl-tRNA synthetase family. Glutamate--tRNA ligase type 1 subfamily. Monomer.

The protein localises to the cytoplasm. It catalyses the reaction tRNA(Glu) + L-glutamate + ATP = L-glutamyl-tRNA(Glu) + AMP + diphosphate. Its function is as follows. Catalyzes the attachment of glutamate to tRNA(Glu) in a two-step reaction: glutamate is first activated by ATP to form Glu-AMP and then transferred to the acceptor end of tRNA(Glu). This is Glutamate--tRNA ligase from Bacteroides thetaiotaomicron (strain ATCC 29148 / DSM 2079 / JCM 5827 / CCUG 10774 / NCTC 10582 / VPI-5482 / E50).